A 658-amino-acid chain; its full sequence is Transmembrane 9 superfamily member 11 (658 aa).

The signal sequence occupies residues 1 to 23; the sequence is MRSMDRFGIWVLAILLVIQSSFG. Over 24 to 291 the chain is Lumenal; sequence FYLPGSYPHK…LKMEGSKVHW (268 aa). A helical membrane pass occupies residues 292-312; sequence FSILNSLMVITFLAGIVLVIF. Over 313–364 the chain is Cytoplasmic; it reads LRTVRRDLTRYEELDKEAQAQMNEELSGWKLVVGDVFRAPSNASLLCVMVGD. A helical transmembrane segment spans residues 365–385; it reads GVQILGMAVVTILFAALGFMS. At 386-391 the chain is on the lumenal side; that stretch reads PASRGT. A helical membrane pass occupies residues 392 to 412; that stretch reads LITGMLFFYMILGIAAGYVSV. Residues 413–432 are Cytoplasmic-facing; it reads RLWRTIGCGEHRGWMSVAWK. Residues 433–453 form a helical membrane-spanning segment; it reads AACFFPGIAFLILTTLNFLLW. Residues 454-462 are Lumenal-facing; sequence GSHSTGAIP. The chain crosses the membrane as a helical span at residues 463-483; it reads FSLFVILLLLWFCISVPLTLI. Over 484–515 the chain is Cytoplasmic; the sequence is GGYFGAKAPHIEFPVRTNQIPREIPAQKYPSW. The helical transmembrane segment at 516 to 536 threads the bilayer; the sequence is LLVLGAGTLPFGTLFIELFFI. The Lumenal portion of the chain corresponds to 537–547; it reads MSSIWMGRVYY. A helical transmembrane segment spans residues 548-568; sequence VFGFLFVVLILLVVVCAEVSL. Residues 569–586 are Cytoplasmic-facing; the sequence is VLTYMHLCVEDYKWWWKS. The helical transmembrane segment at 587 to 607 threads the bilayer; the sequence is FFASGSVAIYIFIYSINYLVF. Over 608-619 the chain is Lumenal; that stretch reads DLKSLSGPVSAT. Residues 620-640 traverse the membrane as a helical segment; the sequence is LYLGYSLFMVLAIMLATGTVG. Residues 641-658 lie on the Cytoplasmic side of the membrane; that stretch reads FLSSFWFVHYLFSSVKLD. Positions 647 to 652 match the Endoplasmic reticulum export signal motif; that stretch reads FVHYLF. Positions 656–658 match the Golgi retention signal motif; it reads KLD.

This sequence belongs to the nonaspanin (TM9SF) (TC 9.A.2) family.

It localises to the endosome membrane. It is found in the golgi apparatus membrane. The chain is Transmembrane 9 superfamily member 11 from Arabidopsis thaliana (Mouse-ear cress).